Reading from the N-terminus, the 180-residue chain is Large ribosomal subunit protein uL5 (180 aa).

This sequence belongs to the universal ribosomal protein uL5 family. As to quaternary structure, part of the 50S ribosomal subunit; part of the 5S rRNA/L5/L18/L25 subcomplex. Contacts the 5S rRNA and the P site tRNA. Forms a bridge to the 30S subunit in the 70S ribosome.

Its function is as follows. This is one of the proteins that bind and probably mediate the attachment of the 5S RNA into the large ribosomal subunit, where it forms part of the central protuberance. In the 70S ribosome it contacts protein S13 of the 30S subunit (bridge B1b), connecting the 2 subunits; this bridge is implicated in subunit movement. Contacts the P site tRNA; the 5S rRNA and some of its associated proteins might help stabilize positioning of ribosome-bound tRNAs. This chain is Large ribosomal subunit protein uL5, found in Clostridium botulinum (strain Loch Maree / Type A3).